A 621-amino-acid polypeptide reads, in one-letter code: UvrABC system protein C (621 aa).

The region spanning 20–106 (TQSGIYQFFD…IKSLKPKYNI (87 aa)) is the GIY-YIG domain. Residues 212-247 (KALLKILESKMHTLSHNLQFEEAAIMRDRIQKITQM) enclose the UVR domain.

It belongs to the UvrC family. Interacts with UvrB in an incision complex.

The protein resides in the cytoplasm. In terms of biological role, the UvrABC repair system catalyzes the recognition and processing of DNA lesions. UvrC both incises the 5' and 3' sides of the lesion. The N-terminal half is responsible for the 3' incision and the C-terminal half is responsible for the 5' incision. In Helicobacter hepaticus (strain ATCC 51449 / 3B1), this protein is UvrABC system protein C.